A 216-amino-acid polypeptide reads, in one-letter code: Somatotropin (216 aa).

Positions 1–26 (MAAGPRTSALLAFALLCLPWTREVGA) are cleaved as a signal peptide. Histidine 45 contributes to the Zn(2+) binding site. Residues cysteine 78 and cysteine 189 are joined by a disulfide bond. Residue serine 131 is modified to Phosphoserine. Glutamate 198 lines the Zn(2+) pocket. Residues cysteine 206 and cysteine 214 are joined by a disulfide bond.

Belongs to the somatotropin/prolactin family.

Its subcellular location is the secreted. Its function is as follows. Plays an important role in growth control. Its major role in stimulating body growth is to stimulate the liver and other tissues to secrete IGF1. It stimulates both the differentiation and proliferation of myoblasts. It also stimulates amino acid uptake and protein synthesis in muscle and other tissues. The polypeptide is Somatotropin (GH1) (Sus scrofa (Pig)).